Reading from the N-terminus, the 1416-residue chain is DNA-directed RNA polymerase subunit beta' (1416 aa).

Residues Cys71, Cys73, Cys86, and Cys89 each contribute to the Zn(2+) site. Mg(2+)-binding residues include Asp461, Asp463, and Asp465. Residues Cys815, Cys889, Cys896, and Cys899 each coordinate Zn(2+).

It belongs to the RNA polymerase beta' chain family. In terms of assembly, the RNAP catalytic core consists of 2 alpha, 1 beta, 1 beta' and 1 omega subunit. When a sigma factor is associated with the core the holoenzyme is formed, which can initiate transcription. Mg(2+) is required as a cofactor. Requires Zn(2+) as cofactor.

The enzyme catalyses RNA(n) + a ribonucleoside 5'-triphosphate = RNA(n+1) + diphosphate. DNA-dependent RNA polymerase catalyzes the transcription of DNA into RNA using the four ribonucleoside triphosphates as substrates. In Haemophilus influenzae (strain 86-028NP), this protein is DNA-directed RNA polymerase subunit beta'.